A 572-amino-acid polypeptide reads, in one-letter code: Transcription factor E3 (572 aa).

Serine 47 is subject to Phosphoserine; by MTOR. Residues 87–125 show a composition bias toward low complexity; sequence TTPATLSASSSAGGSRTPAMSSSSSRVLLRQQLMRAQAQ. Residues 87-152 form a disordered region; the sequence is TTPATLSASS…SPAPASPAIS (66 aa). Positions 126–135 are enriched in basic and acidic residues; it reads EQERRERREQ. Arginine 187 carries the asymmetric dimethylarginine modification. Residues 210-248 form a disordered region; the sequence is LASQALTPPPGPSSAQPLPAPETAHATGPTGSAPNSPMA. Positions 259–270 are strong transcription activation domain; it reads EIDDVIDEIISL. The residue at position 320 (serine 320) is a Phosphoserine; by MTOR. Residue lysine 338 forms a Glycyl lysine isopeptide (Lys-Gly) (interchain with G-Cter in SUMO2) linkage. A bHLH domain is found at 345–398; sequence QKKDNHNLIERRRRFNINDRIKELGTLIPKSNDPEMRWNKGTILKASVDYIRKL. A Nuclear localization signal motif is present at residues 355–358; it reads RRRR. The leucine-zipper stretch occupies residues 408–429; it reads LESRQRSLEQANRSLQLRIQEL. Disordered stretches follow at residues 439-495 and 530-572; these read PVPP…APPS and VGGL…EEES. The segment covering 446–457 has biased composition (low complexity); that stretch reads LLSLTTSSVSDS. Phosphoserine is present on residues serine 539, serine 545, serine 551, serine 553, serine 557, and serine 565. Residues 543–572 show a composition bias toward low complexity; the sequence is AASDPLLSSVSPAVSKASSRRSSFSMEEES.

It belongs to the MiT/TFE family. As to quaternary structure, homodimer and heterodimer; with TFEB or MITF. Interacts with RRAGC/RagC GDP-bound and RRAGD/RagD GDP-bound; promoting its recruitment to lysosomal membrane in the presence of nutrients. Interacts with TSC22D1; the interaction is enhanced in the presence of TGF-beta. Sumoylated; does not affect dimerization with MITF. In terms of processing, phosphorylation ar Ser-47 and Ser-320 by MTOR via non-canonical mTORC1 pathway regulates its stability and subcellular location, respectively. When nutrients are present, phosphorylation by MTOR at Ser-47 promotes ubiquitination by the SCF(BTRC) complex, followed by degradation. When nutrients are present, phosphorylation by MTOR at Ser-320 also promotes association with 14-3-3/YWHA adapters and retention in the cytosol. Phosphorylation at Ser-47 plays a more critical role than phosphorylation at Ser-320 for TFE3 inactivation. Inhibition of mTORC1, starvation and lysosomal disruption, promotes dephosphorylation and transcription factor activity. Post-translationally, ubiquitinated by the SCF(BTRC) and SCF(FBXW11) complexes following phosphorylation at Ser-47 by MTOR, leading to its degradation by the proteasome. As to expression, widely expressed.

It localises to the cytoplasm. Its subcellular location is the cytosol. The protein localises to the nucleus. The protein resides in the lysosome membrane. Transcription factor that acts as a master regulator of lysosomal biogenesis and immune response. Specifically recognizes and binds E-box sequences (5'-CANNTG-3'); efficient DNA-binding requires dimerization with itself or with another MiT/TFE family member such as TFEB or MITF. Involved in the cellular response to amino acid availability by acting downstream of MTOR: in the presence of nutrients, TFE3 phosphorylation by MTOR promotes its inactivation. Upon starvation or lysosomal stress, inhibition of MTOR induces TFE3 dephosphorylation, resulting in transcription factor activity. Specifically recognizes and binds the CLEAR-box sequence (5'-GTCACGTGAC-3') present in the regulatory region of many lysosomal genes, leading to activate their expression, thereby playing a central role in expression of lysosomal genes. Maintains the pluripotent state of embryonic stem cells by promoting the expression of genes such as ESRRB; mTOR-dependent TFE3 cytosolic retention and inactivation promotes exit from pluripotency. Required to maintain the naive pluripotent state of hematopoietic stem cell; mTOR-dependent cytoplasmic retention of TFE3 promotes the exit of hematopoietic stem cell from pluripotency. TFE3 activity is also involved in the inhibition of neuronal progenitor differentiation. Acts as a positive regulator of browning of adipose tissue by promoting expression of target genes; mTOR-dependent phosphorylation promotes cytoplasmic retention of TFE3 and inhibits browning of adipose tissue. In association with TFEB, activates the expression of CD40L in T-cells, thereby playing a role in T-cell-dependent antibody responses in activated CD4(+) T-cells and thymus-dependent humoral immunity. Specifically recognizes the MUE3 box, a subset of E-boxes, present in the immunoglobulin enhancer. It also binds very well to a USF/MLTF site. Promotes TGF-beta-induced transcription of COL1A2; via its interaction with TSC22D1 at E-boxes in the gene proximal promoter. May regulate lysosomal positioning in response to nutrient deprivation by promoting the expression of PIP4P1. This chain is Transcription factor E3, found in Mus musculus (Mouse).